A 248-amino-acid polypeptide reads, in one-letter code: Pyridoxine 5'-phosphate synthase (248 aa).

Asparagine 10 provides a ligand contact to 3-amino-2-oxopropyl phosphate. 12 to 13 contacts 1-deoxy-D-xylulose 5-phosphate; the sequence is DH. Arginine 21 provides a ligand contact to 3-amino-2-oxopropyl phosphate. The active-site Proton acceptor is the histidine 46. Residues arginine 48 and histidine 53 each coordinate 1-deoxy-D-xylulose 5-phosphate. Glutamate 73 functions as the Proton acceptor in the catalytic mechanism. Threonine 103 lines the 1-deoxy-D-xylulose 5-phosphate pocket. The Proton donor role is filled by histidine 194. Residues glycine 195 and 216–217 contribute to the 3-amino-2-oxopropyl phosphate site; that span reads GH.

Belongs to the PNP synthase family. Homooctamer; tetramer of dimers.

It is found in the cytoplasm. The catalysed reaction is 3-amino-2-oxopropyl phosphate + 1-deoxy-D-xylulose 5-phosphate = pyridoxine 5'-phosphate + phosphate + 2 H2O + H(+). The protein operates within cofactor biosynthesis; pyridoxine 5'-phosphate biosynthesis; pyridoxine 5'-phosphate from D-erythrose 4-phosphate: step 5/5. Catalyzes the complicated ring closure reaction between the two acyclic compounds 1-deoxy-D-xylulose-5-phosphate (DXP) and 3-amino-2-oxopropyl phosphate (1-amino-acetone-3-phosphate or AAP) to form pyridoxine 5'-phosphate (PNP) and inorganic phosphate. The protein is Pyridoxine 5'-phosphate synthase of Legionella pneumophila (strain Lens).